We begin with the raw amino-acid sequence, 220 residues long: Probable nicotinate-nucleotide adenylyltransferase (220 aa).

The protein belongs to the NadD family.

The enzyme catalyses nicotinate beta-D-ribonucleotide + ATP + H(+) = deamido-NAD(+) + diphosphate. Its pathway is cofactor biosynthesis; NAD(+) biosynthesis; deamido-NAD(+) from nicotinate D-ribonucleotide: step 1/1. Its function is as follows. Catalyzes the reversible adenylation of nicotinate mononucleotide (NaMN) to nicotinic acid adenine dinucleotide (NaAD). This is Probable nicotinate-nucleotide adenylyltransferase from Saccharophagus degradans (strain 2-40 / ATCC 43961 / DSM 17024).